Reading from the N-terminus, the 379-residue chain is Succinyl-diaminopimelate desuccinylase (379 aa).

Zn(2+) is bound at residue histidine 70. Aspartate 72 is an active-site residue. Position 103 (aspartate 103) interacts with Zn(2+). Glutamate 137 serves as the catalytic Proton acceptor. The Zn(2+) site is built by glutamate 138, glutamate 166, and histidine 352.

This sequence belongs to the peptidase M20A family. DapE subfamily. Homodimer. It depends on Zn(2+) as a cofactor. Co(2+) is required as a cofactor.

It catalyses the reaction N-succinyl-(2S,6S)-2,6-diaminopimelate + H2O = (2S,6S)-2,6-diaminopimelate + succinate. It participates in amino-acid biosynthesis; L-lysine biosynthesis via DAP pathway; LL-2,6-diaminopimelate from (S)-tetrahydrodipicolinate (succinylase route): step 3/3. In terms of biological role, catalyzes the hydrolysis of N-succinyl-L,L-diaminopimelic acid (SDAP), forming succinate and LL-2,6-diaminopimelate (DAP), an intermediate involved in the bacterial biosynthesis of lysine and meso-diaminopimelic acid, an essential component of bacterial cell walls. The chain is Succinyl-diaminopimelate desuccinylase from Burkholderia orbicola (strain MC0-3).